A 430-amino-acid chain; its full sequence is Enolase (430 aa).

Residue Gln163 participates in (2R)-2-phosphoglycerate binding. Glu205 serves as the catalytic Proton donor. Mg(2+)-binding residues include Asp242, Glu287, and Asp314. The (2R)-2-phosphoglycerate site is built by Lys339, Arg368, Ser369, and Lys390. Residue Lys339 is the Proton acceptor of the active site.

It belongs to the enolase family. The cofactor is Mg(2+).

It is found in the cytoplasm. It localises to the secreted. Its subcellular location is the cell surface. It catalyses the reaction (2R)-2-phosphoglycerate = phosphoenolpyruvate + H2O. The protein operates within carbohydrate degradation; glycolysis; pyruvate from D-glyceraldehyde 3-phosphate: step 4/5. In terms of biological role, catalyzes the reversible conversion of 2-phosphoglycerate (2-PG) into phosphoenolpyruvate (PEP). It is essential for the degradation of carbohydrates via glycolysis. The polypeptide is Enolase (Bacillus licheniformis (strain ATCC 14580 / DSM 13 / JCM 2505 / CCUG 7422 / NBRC 12200 / NCIMB 9375 / NCTC 10341 / NRRL NRS-1264 / Gibson 46)).